The primary structure comprises 239 residues: Ribonuclease PH (239 aa).

Residues Arg86 and Gly124–Arg126 contribute to the phosphate site.

This sequence belongs to the RNase PH family. In terms of assembly, homohexameric ring arranged as a trimer of dimers.

It catalyses the reaction tRNA(n+1) + phosphate = tRNA(n) + a ribonucleoside 5'-diphosphate. Its function is as follows. Phosphorolytic 3'-5' exoribonuclease that plays an important role in tRNA 3'-end maturation. Removes nucleotide residues following the 3'-CCA terminus of tRNAs; can also add nucleotides to the ends of RNA molecules by using nucleoside diphosphates as substrates, but this may not be physiologically important. Probably plays a role in initiation of 16S rRNA degradation (leading to ribosome degradation) during starvation. This is Ribonuclease PH from Rhizobium leguminosarum bv. trifolii (strain WSM2304).